Consider the following 492-residue polypeptide: Dynein regulatory complex subunit 2 (492 aa).

Coiled coils occupy residues 16-95 (LTEE…FERV), 256-318 (VQSA…AAQA), and 373-401 (LSEE…HDYS).

The protein belongs to the DRC2 family. As to quaternary structure, component of the nexin-dynein regulatory complex (N-DRC).

The protein localises to the cytoplasm. It is found in the cytoskeleton. The protein resides in the flagellum basal body. It localises to the cell projection. Its subcellular location is the cilium. The protein localises to the flagellum. It is found in the flagellum axoneme. Its function is as follows. Component of the nexin-dynein regulatory complex (N-DRC), a key regulator of ciliary/flagellar motility which maintains the alignment and integrity of the distal axoneme and regulates microtubule sliding in motile axonemes. Plays a critical role in the assembly of N-DRC and also stabilizes the assembly of multiple inner dynein arms and radial spokes. Coassembles with DRC1 to form a central scaffold needed for assembly of the N-DRC and its attachment to the outer doublet microtubules. This Danio rerio (Zebrafish) protein is Dynein regulatory complex subunit 2 (ccdc65).